The chain runs to 311 residues: Ribonuclease Z (311 aa).

The Zn(2+) site is built by His61, His63, Asp65, His66, His139, Asp210, and His268. Asp65 acts as the Proton acceptor in catalysis.

It belongs to the RNase Z family. Homodimer. Zn(2+) is required as a cofactor.

The enzyme catalyses Endonucleolytic cleavage of RNA, removing extra 3' nucleotides from tRNA precursor, generating 3' termini of tRNAs. A 3'-hydroxy group is left at the tRNA terminus and a 5'-phosphoryl group is left at the trailer molecule.. Its function is as follows. Zinc phosphodiesterase, which displays some tRNA 3'-processing endonuclease activity. Probably involved in tRNA maturation, by removing a 3'-trailer from precursor tRNA. The chain is Ribonuclease Z from Haloarcula marismortui (strain ATCC 43049 / DSM 3752 / JCM 8966 / VKM B-1809) (Halobacterium marismortui).